The following is a 264-amino-acid chain: 3-methyl-2-oxobutanoate hydroxymethyltransferase (264 aa).

Mg(2+) is bound by residues Asp45 and Asp84. Residues 45–46, Asp84, and Lys112 contribute to the 3-methyl-2-oxobutanoate site; that span reads DS. Residue Glu114 coordinates Mg(2+). The active-site Proton acceptor is the Glu181.

The protein belongs to the PanB family. Homodecamer; pentamer of dimers. Mg(2+) serves as cofactor.

The protein resides in the cytoplasm. It catalyses the reaction 3-methyl-2-oxobutanoate + (6R)-5,10-methylene-5,6,7,8-tetrahydrofolate + H2O = 2-dehydropantoate + (6S)-5,6,7,8-tetrahydrofolate. It participates in cofactor biosynthesis; (R)-pantothenate biosynthesis; (R)-pantoate from 3-methyl-2-oxobutanoate: step 1/2. In terms of biological role, catalyzes the reversible reaction in which hydroxymethyl group from 5,10-methylenetetrahydrofolate is transferred onto alpha-ketoisovalerate to form ketopantoate. The protein is 3-methyl-2-oxobutanoate hydroxymethyltransferase of Colwellia psychrerythraea (strain 34H / ATCC BAA-681) (Vibrio psychroerythus).